Reading from the N-terminus, the 338-residue chain is tRNA N6-adenosine threonylcarbamoyltransferase (338 aa).

Fe cation contacts are provided by His-110 and His-114. Substrate contacts are provided by residues 132 to 136 (VLSGG), Asp-165, Gly-178, and Asn-274. Residue Asp-298 participates in Fe cation binding.

It belongs to the KAE1 / TsaD family. Fe(2+) is required as a cofactor.

The protein localises to the cytoplasm. The catalysed reaction is L-threonylcarbamoyladenylate + adenosine(37) in tRNA = N(6)-L-threonylcarbamoyladenosine(37) in tRNA + AMP + H(+). Its function is as follows. Required for the formation of a threonylcarbamoyl group on adenosine at position 37 (t(6)A37) in tRNAs that read codons beginning with adenine. Is involved in the transfer of the threonylcarbamoyl moiety of threonylcarbamoyl-AMP (TC-AMP) to the N6 group of A37, together with TsaE and TsaB. TsaD likely plays a direct catalytic role in this reaction. The chain is tRNA N6-adenosine threonylcarbamoyltransferase from Borrelia recurrentis (strain A1).